The primary structure comprises 168 residues: G/U mismatch-specific DNA glycosylase (168 aa).

Belongs to the uracil-DNA glycosylase (UDG) superfamily. TDG/mug family. As to quaternary structure, binds DNA as a monomer.

The protein resides in the cytoplasm. It catalyses the reaction Specifically hydrolyzes mismatched double-stranded DNA and polynucleotides, releasing free uracil.. Excises ethenocytosine and uracil, which can arise by alkylation or deamination of cytosine, respectively, from the corresponding mispairs with guanine in ds-DNA. It is capable of hydrolyzing the carbon-nitrogen bond between the sugar-phosphate backbone of the DNA and the mispaired base. The complementary strand guanine functions in substrate recognition. Required for DNA damage lesion repair in stationary-phase cells. This is G/U mismatch-specific DNA glycosylase from Salmonella gallinarum (strain 287/91 / NCTC 13346).